Reading from the N-terminus, the 556-residue chain is Urease subunit alpha 1 (556 aa).

In terms of domain architecture, Urease spans 127–556; that stretch reads GAVDTHVHLL…SVSLNRLYFL (430 aa). The Ni(2+) site is built by H132, H134, and K212. K212 carries the N6-carboxylysine modification. H214 is a binding site for substrate. Ni(2+) contacts are provided by H241 and H267. H315 (proton donor) is an active-site residue. D355 lines the Ni(2+) pocket.

It belongs to the metallo-dependent hydrolases superfamily. Urease alpha subunit family. In terms of assembly, may form a heterohexamer of 3 UreC (alpha) and 3 UreAB (gamma/beta) subunits. May also form a heterotrimer of UreA (gamma), UreB (beta) and UreC (alpha) subunits. Three heterotrimers associate to form the active enzyme. It depends on Ni cation as a cofactor. Carboxylation allows a single lysine to coordinate two nickel ions.

It is found in the cytoplasm. It carries out the reaction urea + 2 H2O + H(+) = hydrogencarbonate + 2 NH4(+). It functions in the pathway nitrogen metabolism; urea degradation; CO(2) and NH(3) from urea (urease route): step 1/1. In Streptomyces avermitilis (strain ATCC 31267 / DSM 46492 / JCM 5070 / NBRC 14893 / NCIMB 12804 / NRRL 8165 / MA-4680), this protein is Urease subunit alpha 1.